The sequence spans 436 residues: Adenylosuccinate synthetase (436 aa).

GTP is bound by residues 12-18 (GDEGKGK) and 40-42 (GHT). Asp-13 serves as the catalytic Proton acceptor. Asp-13 and Gly-40 together coordinate Mg(2+). Residues 13–16 (DEGK), 38–41 (NAGH), Thr-128, Arg-142, Gln-223, Thr-238, and Arg-302 each bind IMP. His-41 serves as the catalytic Proton donor. 298–304 (TTTGRRR) is a binding site for substrate. GTP-binding positions include Arg-304, 330–332 (KLD), and 412–414 (SLG).

It belongs to the adenylosuccinate synthetase family. In terms of assembly, homodimer. Requires Mg(2+) as cofactor.

Its subcellular location is the cytoplasm. The catalysed reaction is IMP + L-aspartate + GTP = N(6)-(1,2-dicarboxyethyl)-AMP + GDP + phosphate + 2 H(+). The protein operates within purine metabolism; AMP biosynthesis via de novo pathway; AMP from IMP: step 1/2. Plays an important role in the de novo pathway of purine nucleotide biosynthesis. Catalyzes the first committed step in the biosynthesis of AMP from IMP. The protein is Adenylosuccinate synthetase of Prochlorococcus marinus (strain MIT 9312).